The sequence spans 205 residues: Proteasome subunit beta type-3 (205 aa).

The protein belongs to the peptidase T1B family. In terms of assembly, the 26S proteasome consists of a 20S proteasome core and two 19S regulatory subunits. The 20S proteasome core is composed of 28 subunits that are arranged in four stacked rings, resulting in a barrel-shaped structure. The two end rings are each formed by seven alpha subunits, and the two central rings are each formed by seven beta subunits. The catalytic chamber with the active sites is on the inside of the barrel.

Its subcellular location is the cytoplasm. It is found in the nucleus. In terms of biological role, non-catalytic component of the proteasome, a multicatalytic proteinase complex which is characterized by its ability to cleave peptides with Arg, Phe, Tyr, Leu, and Glu adjacent to the leaving group at neutral or slightly basic pH. The proteasome has an ATP-dependent proteolytic activity. The polypeptide is Proteasome subunit beta type-3 (Drosophila melanogaster (Fruit fly)).